The primary structure comprises 64 residues: Translational regulator CsrA (64 aa).

It belongs to the CsrA/RsmA family. Homodimer; the beta-strands of each monomer intercalate to form a hydrophobic core, while the alpha-helices form wings that extend away from the core.

It is found in the cytoplasm. A key translational regulator that binds mRNA to regulate translation initiation and/or mRNA stability. Mediates global changes in gene expression, shifting from rapid growth to stress survival by linking envelope stress, the stringent response and the catabolite repression systems. Usually binds in the 5'-UTR; binding at or near the Shine-Dalgarno sequence prevents ribosome-binding, repressing translation, binding elsewhere in the 5'-UTR can activate translation and/or stabilize the mRNA. Its function is antagonized by small RNA(s). The protein is Translational regulator CsrA of Dichelobacter nodosus (strain VCS1703A).